Reading from the N-terminus, the 1091-residue chain is ATP-dependent helicase/deoxyribonuclease subunit B (1091 aa).

The protein belongs to the helicase family. AddB/RexB type 2 subfamily. Heterodimer of AddA and RexB. It depends on Mg(2+) as a cofactor.

Functionally, the heterodimer acts as both an ATP-dependent DNA helicase and an ATP-dependent, dual-direction single-stranded exonuclease. Recognizes the chi site generating a DNA molecule suitable for the initiation of homologous recombination. This subunit has 5' -&gt; 3' nuclease activity but not helicase activity. The polypeptide is ATP-dependent helicase/deoxyribonuclease subunit B (Streptococcus pneumoniae (strain Hungary19A-6)).